The sequence spans 241 residues: Caffeoyl-CoA O-methyltransferase (241 aa).

Met1 is subject to Blocked amino end (Met). A substrate-binding site is contributed by Lys15. S-adenosyl-L-methionine-binding positions include Thr57, Glu79, 81 to 82 (GV), Ser87, Asp105, and Ala134. Substrate is bound at residue Asp157. Residue Asp157 coordinates a divalent metal cation. Asp159 is a binding site for S-adenosyl-L-methionine. A divalent metal cation contacts are provided by Asp183 and Asn184. Residue Asn188 coordinates substrate.

Belongs to the class I-like SAM-binding methyltransferase superfamily. Cation-dependent O-methyltransferase family. CCoAMT subfamily. Homodimer. The cofactor is a divalent metal cation. As to expression, roots and leaves.

The enzyme catalyses (E)-caffeoyl-CoA + S-adenosyl-L-methionine = (E)-feruloyl-CoA + S-adenosyl-L-homocysteine + H(+). It participates in aromatic compound metabolism; phenylpropanoid biosynthesis. Functionally, methylates caffeoyl-CoA to feruloyl-CoA and 5-hydroxyferuloyl-CoA to sinapoyl-CoA. Plays a role in the synthesis of feruloylated polysaccharides. Involved in the reinforcement of the plant cell wall. Also involved in the responding to wounding or pathogen challenge by the increased formation of cell wall-bound ferulic acid polymers. In Petroselinum crispum (Parsley), this protein is Caffeoyl-CoA O-methyltransferase.